A 225-amino-acid chain; its full sequence is Small ribosomal subunit protein eS1 (225 aa).

The protein belongs to the eukaryotic ribosomal protein eS1 family.

This is Small ribosomal subunit protein eS1 from Methanococcus maripaludis (strain C6 / ATCC BAA-1332).